The chain runs to 401 residues: 1-deoxy-D-xylulose 5-phosphate reductoisomerase (401 aa).

Residues Thr10, Gly11, Ser12, Ile13, Gly36, Asn38, and Asn124 each coordinate NADPH. Lys125 lines the 1-deoxy-D-xylulose 5-phosphate pocket. Residue Glu126 coordinates NADPH. Asp150 lines the Mn(2+) pocket. Ser151, Glu152, Ser186, and His209 together coordinate 1-deoxy-D-xylulose 5-phosphate. Glu152 is a Mn(2+) binding site. Gly215 is an NADPH binding site. The 1-deoxy-D-xylulose 5-phosphate site is built by Ser222, Asn227, Lys228, and Glu231. Mn(2+) is bound at residue Glu231.

This sequence belongs to the DXR family. Requires Mg(2+) as cofactor. The cofactor is Mn(2+).

The catalysed reaction is 2-C-methyl-D-erythritol 4-phosphate + NADP(+) = 1-deoxy-D-xylulose 5-phosphate + NADPH + H(+). It functions in the pathway isoprenoid biosynthesis; isopentenyl diphosphate biosynthesis via DXP pathway; isopentenyl diphosphate from 1-deoxy-D-xylulose 5-phosphate: step 1/6. In terms of biological role, catalyzes the NADPH-dependent rearrangement and reduction of 1-deoxy-D-xylulose-5-phosphate (DXP) to 2-C-methyl-D-erythritol 4-phosphate (MEP). This Vibrio parahaemolyticus serotype O3:K6 (strain RIMD 2210633) protein is 1-deoxy-D-xylulose 5-phosphate reductoisomerase.